The following is a 101-amino-acid chain: Small ribosomal subunit protein uS17 (101 aa).

It belongs to the universal ribosomal protein uS17 family. In terms of assembly, part of the 30S ribosomal subunit.

In terms of biological role, one of the primary rRNA binding proteins, it binds specifically to the 5'-end of 16S ribosomal RNA. The chain is Small ribosomal subunit protein uS17 from Kosmotoga olearia (strain ATCC BAA-1733 / DSM 21960 / TBF 19.5.1).